The sequence spans 256 residues: Triosephosphate isomerase (256 aa).

10-12 contributes to the substrate binding site; that stretch reads NWK. Histidine 97 acts as the Electrophile in catalysis. Glutamate 169 (proton acceptor) is an active-site residue. Substrate is bound by residues glycine 175, serine 214, and 235 to 236; that span reads GG.

It belongs to the triosephosphate isomerase family. Homodimer.

The protein resides in the cytoplasm. The enzyme catalyses D-glyceraldehyde 3-phosphate = dihydroxyacetone phosphate. Its pathway is carbohydrate biosynthesis; gluconeogenesis. The protein operates within carbohydrate degradation; glycolysis; D-glyceraldehyde 3-phosphate from glycerone phosphate: step 1/1. Its function is as follows. Involved in the gluconeogenesis. Catalyzes stereospecifically the conversion of dihydroxyacetone phosphate (DHAP) to D-glyceraldehyde-3-phosphate (G3P). This chain is Triosephosphate isomerase, found in Haemophilus ducreyi (strain 35000HP / ATCC 700724).